A 350-amino-acid chain; its full sequence is Protein XRP2 (350 aa).

The segment covering 1 to 10 (MGCFFSKRRK) has biased composition (basic residues). Positions 1 to 31 (MGCFFSKRRKADKESRPENEEERPKQYSWDQ) are disordered. Gly2 carries the N-myristoyl glycine lipid modification. Cys3 carries the S-palmitoyl cysteine lipid modification. The segment covering 11–31 (ADKESRPENEEERPKQYSWDQ) has biased composition (basic and acidic residues). In terms of domain architecture, C-CAP/cofactor C-like spans 24–179 (PKQYSWDQRE…TWSNIHDFTP (156 aa)). GTP-binding positions include 98-99 (GS) and 115-118 (QQFR).

This sequence belongs to the TBCC family. In terms of assembly, found in a complex with ARL3, RP2 and UNC119 (or UNC119B); RP2 induces hydrolysis of GTP ARL3 in the complex, leading to the release of UNC119 (or UNC119B). Interacts with ARL3; interaction is direct and stimulated with the activated GTP-bound form of ARL3. In terms of processing, myristoylated on Gly-2; which may be required for membrane targeting. Post-translationally, palmitoylated on Cys-3; which may be required for plasma membrane targeting. Mutation of Cys-3 targets the protein to internal membranes. Ubiquitous. Expressed in the rod and cone photoreceptors, extending from the tips of the outer segment (OS) through the inner segment (IS) and outer nuclear layer (ONL) and into the synaptic terminals of the outer plexiform layer (ONL). Also detected in the bipolar, horizontal and amacrine cells in the inner nuclear layer (INL), extending to the inner plexiform layer (IPL) and though the ganglion cell layer (GCL) and into the nerve fiber layer (NFL) (at protein level).

The protein resides in the cell membrane. The protein localises to the cell projection. It is found in the cilium. Functionally, acts as a GTPase-activating protein (GAP) involved in trafficking between the Golgi and the ciliary membrane. Involved in localization of proteins, such as NPHP3, to the cilium membrane by inducing hydrolysis of GTP ARL3, leading to the release of UNC119 (or UNC119B). Acts as a GTPase-activating protein (GAP) for tubulin in concert with tubulin-specific chaperone C, but does not enhance tubulin heterodimerization. Acts as a guanine nucleotide dissociation inhibitor towards ADP-ribosylation factor-like proteins. In Homo sapiens (Human), this protein is Protein XRP2 (RP2).